A 41-amino-acid chain; its full sequence is trp operon leader peptide (41 aa).

In terms of biological role, this protein is involved in control of the biosynthesis of tryptophan. This Vibrio parahaemolyticus serotype O3:K6 (strain RIMD 2210633) protein is trp operon leader peptide (trpL).